Consider the following 411-residue polypeptide: Peptidase T (411 aa).

His78 contacts Zn(2+). Residue Asp80 is part of the active site. Asp140 contacts Zn(2+). The active-site Proton acceptor is Glu173. Zn(2+) is bound by residues Glu174, Asp196, and His379.

The protein belongs to the peptidase M20B family. Requires Zn(2+) as cofactor.

It localises to the cytoplasm. The catalysed reaction is Release of the N-terminal residue from a tripeptide.. In terms of biological role, cleaves the N-terminal amino acid of tripeptides. The sequence is that of Peptidase T from Yersinia pseudotuberculosis serotype O:3 (strain YPIII).